The primary structure comprises 498 residues: Protein YhjJ (498 aa).

The first 24 residues, 1–24, serve as a signal peptide directing secretion; sequence MQGTKIRLLAGGLLMMATAGYVQA.

Belongs to the peptidase M16 family.

Its subcellular location is the periplasm. The polypeptide is Protein YhjJ (yhjJ) (Escherichia coli (strain K12)).